The following is a 264-amino-acid chain: Flagellar brake protein YcgR 1 (264 aa).

One can recognise a PilZ domain in the interval 132–249; sequence QRREFFRLES…RLAMIERYIA (118 aa).

It belongs to the YcgR family. Monomer. Interacts with the flagellar basal bodies.

The protein localises to the bacterial flagellum basal body. Acts as a flagellar brake, regulating swimming and swarming in a bis-(3'-5') cyclic diguanylic acid (c-di-GMP)-dependent manner. Binds 1 c-di-GMP dimer per subunit. Increasing levels of c-di-GMP lead to decreased motility. The chain is Flagellar brake protein YcgR 1 from Dechloromonas aromatica (strain RCB).